We begin with the raw amino-acid sequence, 440 residues long: MERDIYLIGLNHRTAGVEVRERFALTDCNVLEQGVVPIDDVVSEVLILSTCNRVEILAVGRGPEVVSRVLRGWSAARGQCEHDLAPYVYTHKGPEAIRHLFRVASSLDSMVVGEPQILGQLKDAYRKAIERNCTRVILNRLLHKAFSVAKRVRTETGVASSAVSISYAAVELAKRIFGEMNQYKAMLIGAGEMAELAATHLLHAGISKIYVANRTFERGRELARQFNGEAIHFEDLFERLADADIIISSTGAHEAIIRARDIKDVLRRRKHRPMFFIDIAVPRDIDPDVNNLDNVYLYDIDDLKEVVEENLAQRREEASKALTIVEEETGKFGQWLRSLELQPTIVDLIRRSERIAQDELARTLKRLGPVDDETRDALEAMLSSMVRKLNHEPITFLKRRHSEEDAGPRYIDIARRMFNLDDDNVPPDAHCDRRRHDEDN.

Substrate contacts are provided by residues 50-53 (TCNR), S109, 114-116 (EPQ), and Q120. The Nucleophile role is filled by C51. 189 to 194 (GAGEMA) contributes to the NADP(+) binding site.

The protein belongs to the glutamyl-tRNA reductase family. Homodimer.

The catalysed reaction is (S)-4-amino-5-oxopentanoate + tRNA(Glu) + NADP(+) = L-glutamyl-tRNA(Glu) + NADPH + H(+). The protein operates within porphyrin-containing compound metabolism; protoporphyrin-IX biosynthesis; 5-aminolevulinate from L-glutamyl-tRNA(Glu): step 1/2. In terms of biological role, catalyzes the NADPH-dependent reduction of glutamyl-tRNA(Glu) to glutamate 1-semialdehyde (GSA). In Nitratidesulfovibrio vulgaris (strain ATCC 29579 / DSM 644 / CCUG 34227 / NCIMB 8303 / VKM B-1760 / Hildenborough) (Desulfovibrio vulgaris), this protein is Glutamyl-tRNA reductase.